The primary structure comprises 602 residues: Elongation factor 4 (602 aa).

In terms of domain architecture, tr-type G spans 8 to 189; that stretch reads KNIRNFSIIA…KIITTIPAPS (182 aa). GTP-binding positions include 20–25 and 136–139; these read DHGKST and NKID.

This sequence belongs to the TRAFAC class translation factor GTPase superfamily. Classic translation factor GTPase family. LepA subfamily.

The protein resides in the cell inner membrane. It catalyses the reaction GTP + H2O = GDP + phosphate + H(+). Its function is as follows. Required for accurate and efficient protein synthesis under certain stress conditions. May act as a fidelity factor of the translation reaction, by catalyzing a one-codon backward translocation of tRNAs on improperly translocated ribosomes. Back-translocation proceeds from a post-translocation (POST) complex to a pre-translocation (PRE) complex, thus giving elongation factor G a second chance to translocate the tRNAs correctly. Binds to ribosomes in a GTP-dependent manner. This Helicobacter pylori (strain Shi470) protein is Elongation factor 4.